A 398-amino-acid polypeptide reads, in one-letter code: Acetyl-CoA acetyltransferase (398 aa).

Ser-2 is subject to N-acetylserine. Residue Cys-91 is the Acyl-thioester intermediate of the active site. CoA contacts are provided by Tyr-186 and Lys-231. Tyr-186 provides a ligand contact to K(+). K(+) is bound by residues Ala-248, Ala-249, and Ala-251. CoA is bound at residue Ser-252. A K(+)-binding site is contributed by Val-350. Active-site proton acceptor residues include His-354 and Cys-384.

This sequence belongs to the thiolase-like superfamily. Thiolase family. Homotetramer.

The protein resides in the cytoplasm. It carries out the reaction 2 acetyl-CoA = acetoacetyl-CoA + CoA. Its pathway is metabolic intermediate biosynthesis; (R)-mevalonate biosynthesis; (R)-mevalonate from acetyl-CoA: step 1/3. Its function is as follows. Acetyl-CoA acetyltransferase; part of the first module of ergosterol biosynthesis pathway that includes the early steps of the pathway, conserved across all eukaryotes, and which results in the formation of mevalonate from acetyl-coenzyme A (acetyl-CoA). In this module, the acetyl-CoA acetyltransferase ERG10 catalyzes the formation of acetoacetyl-CoA. The hydroxymethylglutaryl-CoA synthase ERG13 then condenses acetyl-CoA with acetoacetyl-CoA to form HMG-CoA. The rate-limiting step of the early module is the reduction to mevalonate by the 3-hydroxy-3-methylglutaryl-coenzyme A (HMG-CoA) reductases HMG1 and HMG2 which are derived from a single ancestral HMGR gene by gene duplication. This chain is Acetyl-CoA acetyltransferase, found in Saccharomyces pastorianus (strain ATCC 76670 / Carlsberg bottom yeast no.2 / CBS 1503 / CLIB 180 / NBRC 10610 / NRRL Y-1525) (Saaz-type lager yeast).